The following is a 564-amino-acid chain: Major facilitator superfamily transporter MPN_076 (564 aa).

A run of 12 helical transmembrane segments spans residues Met-1 to Asp-21, Ile-65 to Tyr-85, Val-89 to Leu-109, Ile-176 to Leu-196, Asn-220 to Val-240, Val-249 to Phe-269, Met-306 to Trp-326, Ala-358 to Phe-378, Ile-404 to Val-424, Ala-425 to Leu-445, Val-457 to Ile-477, and Gly-501 to Val-521.

It belongs to the major facilitator superfamily.

The protein localises to the cell membrane. This chain is Major facilitator superfamily transporter MPN_076, found in Mycoplasma pneumoniae (strain ATCC 29342 / M129 / Subtype 1) (Mycoplasmoides pneumoniae).